Consider the following 455-residue polypeptide: Tryptophan dimethylallyltransferase (455 aa).

L-tryptophan-binding positions include 79–80 and Glu88; that span reads VL. The substrate site is built by Arg99, Lys186, and Tyr188. 2 residues coordinate L-tryptophan: Tyr190 and Arg256. The substrate site is built by Arg269, Lys271, Tyr273, Gln355, Tyr357, Tyr421, and Tyr425.

The protein belongs to the tryptophan dimethylallyltransferase family. As to quaternary structure, homodimer.

The enzyme catalyses L-tryptophan + dimethylallyl diphosphate = 4-(3-methylbut-2-enyl)-L-tryptophan + diphosphate. It participates in alkaloid biosynthesis; ergot alkaloid biosynthesis. In terms of biological role, tryptophan dimethylallyltransferase; part of the gene cluster that mediates the biosynthesis of fungal ergot alkaloid. DmaW catalyzes the first step of ergot alkaloid biosynthesis by condensing dimethylallyl diphosphate (DMAP) and tryptophan to form 4-dimethylallyl-L-tryptophan. The second step is catalyzed by the methyltransferase easF that methylates 4-dimethylallyl-L-tryptophan in the presence of S-adenosyl-L-methionine, resulting in the formation of 4-dimethylallyl-L-abrine. The catalase easC and the FAD-dependent oxidoreductase easE then transform 4-dimethylallyl-L-abrine to chanoclavine-I which is further oxidized by easD in the presence of NAD(+), resulting in the formation of chanoclavine-I aldehyde. Agroclavine dehydrogenase easG then mediates the conversion of chanoclavine-I aldehyde to agroclavine via a non-enzymatic adduct reaction: the substrate is an iminium intermediate that is formed spontaneously from chanoclavine-I aldehyde in the presence of glutathione. Further conversion of agroclavine to paspalic acid is a two-step process involving oxidation of agroclavine to elymoclavine and of elymoclavine to paspalic acid, the second step being performed by the elymoclavine oxidase cloA. However, cloA does not encode a functional enzyme indicating that C.fusiformis terminates its ergot alkaloid pathway at elymoclavine. This is Tryptophan dimethylallyltransferase from Claviceps fusiformis (Ergot fungus).